The primary structure comprises 487 residues: MNSTNSGPPDSGSATGVVPTPDEIASLLQVEHLLDQRWPETRIDPSLTRISALMDLLGSPQRSYPSIHIAGTNGKTSVARMVDALVTALHRRTGRTTSPHLQSPVERISIDGKPISPAQYVATYREIEPLVALIDQQSQASAGKGGPAMSKFEVLTAMAFAAFADAPVDVAVVEVGMGGRWDATNVINAPVAVITPISIDHVDYLGADIAGIAGEKAGIITRAPDGSPDTVAVIGRQVPKVMEVLLAESVRADASVAREDSEFAVLRRQIAVGGQVLQLQGLGGVYSDIYLPLHGEHQAHNAVLALASVEAFFGAGAQRQLDGDAVRAGFAAVTSPGRLERMRSAPTVFIDAAHNPAGASALAQTLAHEFDFRFLVGVLSVLGDKDVDGILAALEPVFDSVVVTHNGSPRALDVEALALAAGERFGPDRVRTAENLRDAIDVATSLVDDAAADPDVAGDAFSRTGIVITGSVVTAGAARTLFGRDPQ.

44–46 (DPS) provides a ligand contact to 7,8-dihydropteroate. 74-77 (GKTS) is a binding site for ATP. Mg(2+)-binding residues include Thr-76 and Ser-98. 150 to 153 (SKFE) provides a ligand contact to 7,8-dihydropteroate. Glu-174 contributes to the Mg(2+) binding site. 181–183 (WDA) provides a ligand contact to 7,8-dihydropteroate. Mg(2+) is bound by residues His-201 and Asp-203. ATP-binding positions include Asn-301, Arg-338, and 351-354 (DAAH). Asp-384 lines the Mg(2+) pocket.

Belongs to the folylpolyglutamate synthase family. As to quaternary structure, monomer. It depends on Mg(2+) as a cofactor.

It carries out the reaction 7,8-dihydropteroate + L-glutamate + ATP = 7,8-dihydrofolate + ADP + phosphate + H(+). It catalyses the reaction (6S)-5,6,7,8-tetrahydrofolyl-(gamma-L-Glu)(n) + L-glutamate + ATP = (6S)-5,6,7,8-tetrahydrofolyl-(gamma-L-Glu)(n+1) + ADP + phosphate + H(+). Its pathway is cofactor biosynthesis; tetrahydrofolate biosynthesis; 7,8-dihydrofolate from 2-amino-4-hydroxy-6-hydroxymethyl-7,8-dihydropteridine diphosphate and 4-aminobenzoate: step 2/2. The protein operates within cofactor biosynthesis; tetrahydrofolylpolyglutamate biosynthesis. Functionally, catalyzes the addition of a glutamate residue to dihydropteroate (7,8-dihydropteroate or H2Pte) to form dihydrofolate (7,8-dihydrofolate monoglutamate or H2Pte-Glu). Also catalyzes successive additions of L-glutamate to tetrahydrofolate, leading to folylpolyglutamate derivatives. Is involved in the bioactivation of the antituberculous drug para-aminosalicylic acid (PAS). Is able to use hydroxy-dihydropteroate (H2PtePAS) as substrate, which is the product formed by the action of DHPS (FolP1) on PAS, leading to hydroxy-dihydrofolate (H2PtePAS-Glu). This compound inhibits dihydrofolate reductase DHFR (DfrA), the next enzyme in the folate pathway, and thus disrupts the folate-dependent metabolic pathways. The sequence is that of Dihydrofolate synthase/folylpolyglutamate synthase from Mycobacterium tuberculosis (strain ATCC 25618 / H37Rv).